The following is a 270-amino-acid chain: MAANVPLSDFLATAVDAAKRAGEVIRKGFYVKKNVEHKGQVDLVTETDKSCEDIIFNCLKQQYPNHKFIGEETTAAYGATELTDEPTWIVDPLDGTTNFVHGFPFVCVSIGLTIGKVPTVGVVYNPIMNELFTGVRRQGAFLNGVPIHVSSKDELVNCLLVTEVGTKRDKSTVDATTNRINGLLFKVRSIRMAGSCALDLCGIACGRADLMYENGYGGAWDVTAGIVIVEEAGGVIFDPSGKDFDITVTRIAASNPLIKDSFVEAFKQAE.

Mg(2+)-binding residues include Glu71, Asp91, Leu93, and Asp94. Residue Glu71 coordinates substrate. Residues 93–96 (LDGT), 194–196 (GSC), Glu213, and Asp221 contribute to the substrate site. Asp221 contributes to the Mg(2+) binding site.

Belongs to the inositol monophosphatase superfamily. It depends on Mg(2+) as a cofactor.

It carries out the reaction a myo-inositol phosphate + H2O = myo-inositol + phosphate. It participates in polyol metabolism; myo-inositol biosynthesis; myo-inositol from D-glucose 6-phosphate: step 2/2. Its activity is regulated as follows. Inhibited by Li(+). In terms of biological role, responsible for the provision of inositol required for synthesis of phosphatidylinositol and polyphosphoinositides. This chain is Inositol monophosphatase (IMP1), found in Mesembryanthemum crystallinum (Common ice plant).